Reading from the N-terminus, the 374-residue chain is Phosphatidylglycerol--prolipoprotein diacylglyceryl transferase (374 aa).

Helical transmembrane passes span 33 to 53 (ICFI…IALF), 155 to 175 (LCWF…VFFY), 195 to 215 (LASH…TSYI), and 222 to 242 (LSFL…AVFI). Residue Arg-243 coordinates a 1,2-diacyl-sn-glycero-3-phospho-(1'-sn-glycerol). The next 3 membrane-spanning stretches (helical) occupy residues 279–299 (PVQL…FTLW), 306–326 (LAAG…RFLL), and 341–361 (ILQM…CLVW).

This sequence belongs to the Lgt family.

The protein resides in the cell inner membrane. The enzyme catalyses L-cysteinyl-[prolipoprotein] + a 1,2-diacyl-sn-glycero-3-phospho-(1'-sn-glycerol) = an S-1,2-diacyl-sn-glyceryl-L-cysteinyl-[prolipoprotein] + sn-glycerol 1-phosphate + H(+). It functions in the pathway protein modification; lipoprotein biosynthesis (diacylglyceryl transfer). In terms of biological role, catalyzes the transfer of the diacylglyceryl group from phosphatidylglycerol to the sulfhydryl group of the N-terminal cysteine of a prolipoprotein, the first step in the formation of mature lipoproteins. This Protochlamydia amoebophila (strain UWE25) protein is Phosphatidylglycerol--prolipoprotein diacylglyceryl transferase.